A 707-amino-acid polypeptide reads, in one-letter code: MFFSQPTHLAKAEELKQAPPKGVAYSVALPGTEQPGRSPVYRAWNAQKELLTTLDPEVTTAHDIFESTAIRHPKNDCLGWRPYNSTTKSFDPYQWLTYETVQKRRAAFGAGIVELHHKHDCHRPGQYGVGLWSQNRPEWQITDLACVSQSLYSVSIYDVLSEDATEYIINHSELSCVVTSLPHIASLIKLKPSLPTLKIIISLDPLDGGEQAGHSKRAIFESMAAGLGLAIYTIDQVEELGLASKRGYNPPSASDIVTINYTSGTTGPPKGVVLTHGNAVAATSCGLITISQARGDTSASYLPLAHIYARLAEHTAFWGAARIGYFHGNIAELVDDLKLLKPTGFMSVPRLYSRFGSAIRAATVEQPGFKGALSRHIIAAKTANMKNPDPSKATVRHALYDRIWAKKVTAALGLERARYMVSGSAPLDPTLHNFLRVATGTDVLQGYGLTESYASATAQPVYDLTAGNCGSLAPCVEACLVSLPDMEYSVDDKPFPRGELLLRGNNMFREYYKNEEETRSAITEDGWFRTGDVCTIDEKGRFIIIDRRKNVLKLAQGEYISPERLEGVVLSELGYIAQAYVHGDSLQTFLVGIFGVAPDLFAPYASKVLGRTIAPTDLEAVKESLNDDKVRRAVLRDLERVAKKHKFAGYERIRNVSLKVEPFTVENNLLTPTLKLKRPPTVKVYRSLLDQLYEQAVEEQSAPKAKL.

259 to 270 lines the ATP pocket; the sequence is INYTSGTTGPPK. The tract at residues 525–549 is fatty acid-binding; that stretch reads DGWFRTGDVCTIDEKGRFIIIDRRK. Positions 705–707 match the Peroxisome targeting signal motif; sequence AKL.

The protein belongs to the ATP-dependent AMP-binding enzyme family.

It is found in the peroxisome matrix. The catalysed reaction is (4E,8E)-10-(4-hydroxy-6-methoxy-7-methyl-3-oxo-1,3-dihydro-2-benzofuran-5-yl)-4,8-dimethyldeca-4,8-dienoate + ATP + CoA = (4E,8E)-10-(4-hydroxy-6-methoxy-7-methyl-3-oxo-1,3-dihydro-2-benzofuran-5-yl)-4,8-dimethyldeca-4,8-dienoyl-CoA + AMP + diphosphate. Its pathway is secondary metabolite biosynthesis; terpenoid biosynthesis. In terms of biological role, acyl-CoA ligase involved in the biosynthesis of mycophenolic acid (MPA), the first isolated antibiotic natural product in the world obtained from a culture of Penicillium brevicompactum in 1893. The peroxisomal acyl-CoA ligase 891 converts the intermediate MFDHMP-3C into MFDHMP-3C-CoA which impairs its diffusion from the peroxisome. The first step of the pathway is the synthesis of 5-methylorsellinic acid (5MOA) by the cytosolic polyketide synthase mpaC. 5MOA is then converted to the phthalide compound 5,7-dihydroxy-4,6-dimethylphthalide (DHMP) by the endoplasmic reticulum-bound cytochrome P450 monooxygenase mpaDE. MpaDE first catalyzes hydroxylation of 5-MOA to 4,6-dihydroxy-2-(hydroxymethyl)-3-methylbenzoic acid (DHMB). MpaDE then acts as a lactone synthase that catalyzes the ring closure to convert DHMB into DHMP. The next step is the prenylation of DHMP by the Golgi apparatus-associated prenyltransferase mpaA to yield farnesyl-DHMP (FDHMP). The ER-bound oxygenase mpaB then mediates the oxidative cleavage the C19-C20 double bond in FDHMP to yield FDHMP-3C via a mycophenolic aldehyde intermediate. The O-methyltransferase mpaG catalyzes the methylation of FDHMP-3C to yield MFDHMP-3C. After the cytosolic methylation of FDHMP-3C, MFDHMP-3C enters into peroxisomes probably via free diffusion due to its low molecular weight. Upon a peroxisomal CoA ligation reaction, catalyzed by a beta-oxidation component enzyme acyl-CoA ligase ACL891, MFDHMP-3C-CoA would then be restricted to peroxisomes for the following beta-oxidation pathway steps. The peroxisomal beta-oxidation machinery than converts MFDHMP-3C-CoA into MPA_CoA, via a beta-oxidation chain-shortening process. Finally mpaH acts as a peroxisomal acyl-CoA hydrolase with high substrate specificity toward MPA-CoA to release the final product MPA. The protein is Acyl-CoA ligase 891, peroxisomal of Penicillium roqueforti (strain FM164).